The sequence spans 185 residues: dTTP/UTP pyrophosphatase (185 aa).

The active-site Proton acceptor is the D67.

This sequence belongs to the Maf family. YhdE subfamily. A divalent metal cation serves as cofactor.

Its subcellular location is the cytoplasm. The enzyme catalyses dTTP + H2O = dTMP + diphosphate + H(+). It carries out the reaction UTP + H2O = UMP + diphosphate + H(+). Functionally, nucleoside triphosphate pyrophosphatase that hydrolyzes dTTP and UTP. May have a dual role in cell division arrest and in preventing the incorporation of modified nucleotides into cellular nucleic acids. The chain is dTTP/UTP pyrophosphatase from Lacticaseibacillus casei (strain BL23) (Lactobacillus casei).